Here is a 341-residue protein sequence, read N- to C-terminus: Follistatin (341 aa).

The first 29 residues, 1-29 (MLNERIQPGMIFLLTVSLCHFMEYRAVQA), serve as a signal peptide directing secretion. The region spanning 30–103 (GNCWLQQSKN…TCENVDCGPG (74 aa)) is the TB domain. 8 cysteine pairs are disulfide-bonded: Cys-32/Cys-55, Cys-42/Cys-88, Cys-56/Cys-91, Cys-95/Cys-106, Cys-100/Cys-116, Cys-118/Cys-150, Cys-122/Cys-143, and Cys-132/Cys-164. N-linked (GlcNAc...) asparagine glycosylation occurs at Asn-72. The 24-residue stretch at 94–117 (TCENVDCGPGKKCKMNKKNKPRCV) folds into the Follistatin-like 1 domain. 3 Kazal-like domains span residues 100 to 166 (CGPG…KCKK), 186 to 241 (NAYC…KCIK), and 264 to 318 (RGRC…SCNS). The N-linked (GlcNAc...) asparagine glycan is linked to Asn-124. Residues 167–190 (TCRDVLCPGSSSCVVDQTNNAYCV) form the Follistatin-like 2 domain. Intrachain disulfides connect Cys-192–Cys-225, Cys-196–Cys-218, and Cys-207–Cys-239. The Follistatin-like 3 domain occupies 244–268 (SCEDIQCSAGKKCLWDSRVGRGRCA). Intrachain disulfides connect Cys-270-Cys-302, Cys-274-Cys-295, and Cys-284-Cys-316. N-linked (GlcNAc...) asparagine glycosylation is present at Asn-288. The segment covering 321-333 (EDTEEEEEEEEPD) has biased composition (acidic residues). The tract at residues 321-341 (EDTEEEEEEEEPDYSFVISSW) is disordered.

As to quaternary structure, monomer. As to expression, spemann organizer and notochord.

The protein localises to the secreted. Its function is as follows. Binds directly to activin and functions as an activin antagonist which plays a role in neural induction. The short isoform is a more potent inhibitor of activin than the long isoform. Specific inhibitor of the biosynthesis and secretion of pituitary follicle stimulating hormone (FSH). This is Follistatin (fst) from Xenopus laevis (African clawed frog).